A 98-amino-acid polypeptide reads, in one-letter code: Toxin ParE1 (98 aa).

Belongs to the RelE toxin family.

Toxic component of a type II toxin-antitoxin (TA) system. Its toxic effect is neutralized by coexpression with cognate antitoxin ParD1. The polypeptide is Toxin ParE1 (parE1) (Mycobacterium tuberculosis (strain CDC 1551 / Oshkosh)).